A 298-amino-acid polypeptide reads, in one-letter code: Cyclin-dependent kinase 2 homolog (298 aa).

The 281-residue stretch at 4 to 284 (YHKMEKIGEG…AKEALKHDYF (281 aa)) folds into the Protein kinase domain. ATP contacts are provided by residues 10-18 (IGEGTYGVV) and Lys32. Phosphothreonine is present on Thr14. Residue Tyr15 is modified to Phosphotyrosine. Residue Asp125 is the Proton acceptor of the active site. A Phosphothreonine modification is found at Thr158.

Belongs to the protein kinase superfamily. CMGC Ser/Thr protein kinase family. CDC2/CDKX subfamily. May form a complex composed of at least the catalytic subunit CRK2 and a cyclin. Mg(2+) serves as cofactor.

It is found in the cytoplasm. It catalyses the reaction L-seryl-[protein] + ATP = O-phospho-L-seryl-[protein] + ADP + H(+). The enzyme catalyses L-threonyl-[protein] + ATP = O-phospho-L-threonyl-[protein] + ADP + H(+). The catalysed reaction is [DNA-directed RNA polymerase] + ATP = phospho-[DNA-directed RNA polymerase] + ADP + H(+). With respect to regulation, phosphorylation at Thr-14 or Tyr-15 inactivates the enzyme, while phosphorylation at Thr-158 activates it. Serine/threonine-protein kinase. Involved in the control of the cell cycle. Required for entry into S-phase and mitosis. Probable component of the kinase complex that phosphorylates the repetitive C-terminus of RNA polymerase II. The sequence is that of Cyclin-dependent kinase 2 homolog from Theileria parva (East coast fever infection agent).